Here is a 228-residue protein sequence, read N- to C-terminus: Ribose-5-phosphate isomerase A (228 aa).

Residues 26 to 29 (SGST), 81 to 84 (DGAD), and 94 to 97 (KGGG) contribute to the substrate site. Residue E103 is the Proton acceptor of the active site. A substrate-binding site is contributed by K121.

The protein belongs to the ribose 5-phosphate isomerase family. As to quaternary structure, homodimer.

It carries out the reaction aldehydo-D-ribose 5-phosphate = D-ribulose 5-phosphate. It participates in carbohydrate degradation; pentose phosphate pathway; D-ribose 5-phosphate from D-ribulose 5-phosphate (non-oxidative stage): step 1/1. In terms of biological role, catalyzes the reversible conversion of ribose-5-phosphate to ribulose 5-phosphate. In Shouchella clausii (strain KSM-K16) (Alkalihalobacillus clausii), this protein is Ribose-5-phosphate isomerase A.